The sequence spans 166 residues: Polyadenylate-binding protein 2 (166 aa).

One can recognise an RRM domain in the interval 55–132 (QSVYVGNVDY…RPLKVTPKRT (78 aa)). Positions 129–166 (PKRTNVPGMSRGRGRGRGRGRGRGRGGYRGRARGFAPY) are disordered. The segment covering 140–160 (GRGRGRGRGRGRGRGGYRGRA) has biased composition (basic residues).

It localises to the nucleus. The sequence is that of Polyadenylate-binding protein 2 (pab2) from Schizosaccharomyces pombe (strain 972 / ATCC 24843) (Fission yeast).